The sequence spans 343 residues: Probable F-box protein At1g67455 (343 aa).

An F-box domain is found at 1–46 (MMISDLPEDMVEEILSRVSIISLGALRWNDLSKARVICKAEARQQF).

In Arabidopsis thaliana (Mouse-ear cress), this protein is Probable F-box protein At1g67455.